The chain runs to 494 residues: MVRRPCVSAAPVRVGGRLVFGFARVGSRGLCLGALLLSPRIVLAQHVADAPLGARGVVPRSSLPRRTRAARATTLRSRGGVVSSRASGGTLVVTAQKPKVMARNDVDYRPLSLQAGGRQGSLDLVATATADDASFFEANAAGSATIPRMTLAFFHTMRISDSHIDVLSFVGRAGRTGYGVSARAFYPDMSSKTTGFVGIFNVSHAFSSAYRFKGVSVGANLKVGYRHTRGGGSSQSKSSNGKENHHIVLTADVGVRGAWTVSKNFGAHEPNLWAGVAFRNIGASINATNLHGNNGAGGSGGGGGGNGDGKPAHVTDSRVILALAYQPVRYFLFGAGLEWLYNVGSIKAVNSLRYGAAFMLFPLRQLAFSSSVVMKGMGPQQVRASAGAEVQFSHVRCTASYSYLWSATPTRPHYVSIGVAGFLKPVPEQPLWQEVYRSYLRGLRHYHAQRYAEAIAEWKRTLQQGVSFEPAREGIERATKLLQLNQKVHDFNIF.

The first 44 residues, 1-44 (MVRRPCVSAAPVRVGGRLVFGFARVGSRGLCLGALLLSPRIVLA), serve as a signal peptide directing secretion.

This sequence belongs to the UPF0164 family.

The chain is UPF0164 protein TP_0859/TP_0860 from Treponema pallidum (strain Nichols).